The sequence spans 355 residues: cGAMP-activated phospholipase (355 aa).

One can recognise a PNPLA domain in the interval 17-214 (LSLNGGGARG…VANNPSFIGL (198 aa)). A GXGXXG motif is present at residues 21–26 (GGGARG). Residues 60-64 (GTSIG) carry the GXSXG motif. The active-site Nucleophile is the S62. D201 functions as the Proton acceptor in the catalytic mechanism. The DGA/G motif lies at 201–203 (DGG).

It belongs to the patatin family.

The catalysed reaction is a 1,2-diacyl-sn-glycero-3-phosphocholine + H2O = a 2-acyl-sn-glycero-3-phosphocholine + a fatty acid + H(+). The enzyme catalyses 1,2-di-(9Z-octadecenoyl)-sn-glycero-3-phosphoethanolamine + 2 H2O = sn-glycero-3-phosphoethanolamine + 2 (9Z)-octadecenoate + 2 H(+). Its activity is regulated as follows. Phospholipase activity is specifically activated upon 3',3'-cGAMP (cGAMP) binding. Is not activated by the other cyclic dinucleotides 3',3'-cUAMP, 3',3'-c-diAMP and 3',3'-c-diGMP. Therefore, is specifically activated by only the nucleotide synthesized from its adjacently encoded nucleotidyltransferase (DncV). The cGAMP-activation of lipase is inhibited by T4 phage protein Acb2 (Vs.4). Effector phospholipase of a CBASS antiviral system. CBASS (cyclic oligonucleotide-based antiphage signaling system) provides immunity against bacteriophages. The CD-NTase protein (DncV) synthesizes cyclic nucleotides in response to infection; these serve as specific second messenger signals. The signals activate a diverse range of effectors, leading to bacterial cell death and thus abortive phage infection. A type II-A(GA) CBASS system. Functionally, phospholipase that is activated upon binding to the cyclic dinucleotide (CDN) second messenger 3',3'-cyclic GMP-AMP (3',3'-cGAMP). Then degrades phosphatidylethanolamine (PE) and phosphatidylglycerol (PG), the major phospholipids in the cell membrane of V.cholerae, releasing 16:1 and 18:1 free fatty acids. Upon expression in E.coli with cognate DncV, the cell inner membrane shrinks and separates from the cell wall. Its function is as follows. Protects E.coli against phage infection. When the CBASS operon (capV-dncV-cap2-cap3) is introduced in E.coli MG1655 there is about 100-fold protection against phages P1 and T2. When the operon is introduced in E.coli MG1655 there is a more than 10(3) decrease in the efficiency of T2 plaque formation. Protects 100-fold against phage T5, offers no protection against T7. When the operon is introduced in E.coli MG1655 it protects against phages T2, T4, T5 and T6. Another paper shows the operon confers protection against phages P1, T2, T5 and T6 but not T4 or lambda. This is cGAMP-activated phospholipase from Vibrio cholerae serotype O1 (strain ATCC 39315 / El Tor Inaba N16961).